Here is a 456-residue protein sequence, read N- to C-terminus: Acid sphingomyelinase-like phosphodiesterase 3b (456 aa).

Positions Met1 to Ala18 are cleaved as a signal peptide. Zn(2+)-binding residues include Asp28 and His30. Asn34 carries N-linked (GlcNAc...) asparagine glycosylation. Cysteines 45 and 64 form a disulfide. The N-linked (GlcNAc...) asparagine glycan is linked to Asn72. Residue Asp93 coordinates Zn(2+). Residue Asn100 is glycosylated (N-linked (GlcNAc...) asparagine). Asn134 contributes to the Zn(2+) binding site. 2 N-linked (GlcNAc...) asparagine glycosylation sites follow: Asn164 and Asn223. Residues His236, His277, and His279 each coordinate Zn(2+). 2 cysteine pairs are disulfide-bonded: Cys405–Cys409 and Cys415–Cys428.

It belongs to the acid sphingomyelinase family. In terms of assembly, interacts with TLR4, TLR7, TLR8 and TLR9. It depends on Zn(2+) as a cofactor. Post-translationally, N-glycosylated. Macrophages and dendritic cells.

It localises to the secreted. The protein localises to the cell membrane. In terms of biological role, lipid-modulating phosphodiesterase. Active on the surface of macrophages and dendritic cells and strongly influences macrophage lipid composition and membrane fluidity. Acts as a negative regulator of Toll-like receptor signaling. Has in vitro phosphodiesterase activity, but the physiological substrate is unknown. Lacks activity with phosphocholine-containing lipids, but can cleave CDP-choline, and can release phosphate from ATP and ADP (in vitro). The chain is Acid sphingomyelinase-like phosphodiesterase 3b (Smpdl3b) from Mus musculus (Mouse).